A 140-amino-acid polypeptide reads, in one-letter code: MGMTVLAFDFGTKSIGCAVGQSITGTAQALPAFKAQDGIPNWDAIGKCLAEWQPDRVVVGLPLNMDGTEQDLTVRARKFAHRLHGRFGVAVELQDERLTTTEARAEIFGRGGYKALNKSKVDGISACLILESWFENQQVK.

The protein belongs to the YqgF nuclease family.

The protein localises to the cytoplasm. In terms of biological role, could be a nuclease involved in processing of the 5'-end of pre-16S rRNA. This Pasteurella multocida (strain Pm70) protein is Putative pre-16S rRNA nuclease.